We begin with the raw amino-acid sequence, 496 residues long: Proline--tRNA ligase (496 aa).

This sequence belongs to the class-II aminoacyl-tRNA synthetase family. ProS type 3 subfamily. As to quaternary structure, homodimer.

It is found in the cytoplasm. It catalyses the reaction tRNA(Pro) + L-proline + ATP = L-prolyl-tRNA(Pro) + AMP + diphosphate. Catalyzes the attachment of proline to tRNA(Pro) in a two-step reaction: proline is first activated by ATP to form Pro-AMP and then transferred to the acceptor end of tRNA(Pro). This is Proline--tRNA ligase from Phocaeicola vulgatus (strain ATCC 8482 / DSM 1447 / JCM 5826 / CCUG 4940 / NBRC 14291 / NCTC 11154) (Bacteroides vulgatus).